Reading from the N-terminus, the 244-residue chain is MAMVPRVLVVDDDPVIRELLQAYLGEEGYDVLCAGNAEQAEACLAECAHLGQPVELVLLDIRLPGKDGLTLTRELRVRSEVGIILITGRNDEIDRIVGLECGADDYVIKPLNPRELVSRAKNLIRRVRHAQASAGPARQALRQFGDWLLDADRRRLIDHAGNETLLTHGEFQLLGAFLRNSGHTLSRDQLMDQIRNREWLPSDRSIDVLVGRLRRKLRDDPAEPQLIITIHGAGYLFTAAASDA.

The 119-residue stretch at 6–124 (RVLVVDDDPV…ELVSRAKNLI (119 aa)) folds into the Response regulatory domain. 4-aspartylphosphate is present on D60. Positions 139-239 (QALRQFGDWL…IHGAGYLFTA (101 aa)) form a DNA-binding region, ompR/PhoB-type.

Phosphorylated by AruS.

It is found in the cytoplasm. Its pathway is amino-acid degradation; L-arginine degradation [regulation]. Functionally, member of the two-component regulatory system AruS/AruR, which is involved in the regulation of the arginine transaminase (ATA) pathway in response to exogeneous L-arginine. Regulates transcription of aruH and aruI. The protein is Transcriptional regulatory protein AruR (aruR) of Pseudomonas aeruginosa (strain ATCC 15692 / DSM 22644 / CIP 104116 / JCM 14847 / LMG 12228 / 1C / PRS 101 / PAO1).